Here is a 680-residue protein sequence, read N- to C-terminus: MQQSPHSPQSQSLSASAVDSAVPLSKLQQTYAVIPRERPQTPLLDSVDSPADLKTFSSAELITLADELRLFVLYSAGQSGGHFGANLGVIELTIALHYLLDTPQDQIVWDVGHQAYAHKVLTGRRDQLGTIRSKTGLTAFPERAESVYDTFGVGHSSTSISAGLGMSLALRYQGRAQTVACIIGDGAMTGGMAFEAMNDAVQQDADLMVILNDNDMSISCSIGGFSRHLAMLWESGYQVDISDAGEPILCQRPDMQAFDRRKRHKEQRDVPQLEDNLFKAIGFTYFGPFDGHNIPELLRVLSLAKQVKGPVLVHIYTTKGKGFAPAELDPVGYHAISSLPAEDNAPKTEKAAIKPSLKYSQVFGQFLCDKAAQDKKLLAITPAMEEGSGMIEFARQFPERFFDVAIAEQHAVTLAGGMATQGVKPIVAIYSTFLQRGYDQLIHDVALQNLDVMFAIDRAGLVGEDGATHAGVFDFAFLRCVPNMLIAAPKDENECYHLLNTCYEYQGCTAVRYPRGVGTGATIIQPAQIYNIGEAVIESVLGTDDAPKKLALLAFGTMVETAQKAAEMIAKSPLLASSCQLHVVNMRWVKPLDTNLLETLVEQGVTHIATLEEHMIMGGAGSAVNEYLLNESAAFKIHRPTICNIGIPDRFVAHGSQAEQLADCGLDVEGVFNQLQNLLS.

Low complexity predominate over residues 1 to 17 (MQQSPHSPQSQSLSASA). Residues 1–20 (MQQSPHSPQSQSLSASAVDS) form a disordered region. Residues histidine 113 and 154 to 156 (GHS) contribute to the thiamine diphosphate site. Aspartate 185 lines the Mg(2+) pocket. Thiamine diphosphate-binding positions include 186 to 187 (GA), asparagine 214, phenylalanine 323, and glutamate 408. Position 214 (asparagine 214) interacts with Mg(2+).

Belongs to the transketolase family. DXPS subfamily. As to quaternary structure, homodimer. The cofactor is Mg(2+). Thiamine diphosphate serves as cofactor.

The catalysed reaction is D-glyceraldehyde 3-phosphate + pyruvate + H(+) = 1-deoxy-D-xylulose 5-phosphate + CO2. Its pathway is metabolic intermediate biosynthesis; 1-deoxy-D-xylulose 5-phosphate biosynthesis; 1-deoxy-D-xylulose 5-phosphate from D-glyceraldehyde 3-phosphate and pyruvate: step 1/1. In terms of biological role, catalyzes the acyloin condensation reaction between C atoms 2 and 3 of pyruvate and glyceraldehyde 3-phosphate to yield 1-deoxy-D-xylulose-5-phosphate (DXP). In Psychrobacter cryohalolentis (strain ATCC BAA-1226 / DSM 17306 / VKM B-2378 / K5), this protein is 1-deoxy-D-xylulose-5-phosphate synthase.